The following is a 2408-amino-acid chain: Protein ELYS (2408 aa).

The seven-bladed beta propeller repeats stretch occupies residues 1 to 492; it reads MQNLEAQVTG…SGLIHFACTG (492 aa). The interval 1016 to 2408 is disordered; the sequence is YSLPSLVWRE…AKPVTRRKMR (1393 aa). The segment covering 1124 to 1145 has biased composition (polar residues); sequence PLTSSDTDNNQTPHKSPLLKTS. Acidic residues predominate over residues 1457–1466; sequence NDQDSEEIEE. Composition is skewed to polar residues over residues 1705 to 1719 and 1735 to 1750; these read INEG…QSTL and PADS…TLPT. A compositionally biased stretch (basic and acidic residues) spans 2136 to 2149; the sequence is QASKIQEDLSDTPR. Sufficient for chromatin-binding stretches follow at residues 2281–2359 and 2359–2408; these read STQY…PVEI and IKLI…RKMR. The tract at residues 2281–2408 is sufficient to block nuclear pore assembly; sequence STQYVFSPPS…AKPVTRRKMR (128 aa). The a.T hook DNA-binding region spans 2329–2341; that stretch reads SKPRGRPPKHKAK. Residues 2331–2348 show a composition bias toward basic residues; sequence PRGRPPKHKAKAVTRVLK. Over residues 2378 to 2389 the composition is skewed to basic and acidic residues; it reads DSTEAKGAEKIS.

The protein belongs to the ELYS family. In terms of assembly, interacts with the Nup107-160 subcomplex of the NPC.

The protein localises to the nucleus. It is found in the nuclear pore complex. It localises to the cytoplasm. Its subcellular location is the nucleoplasm. Required for the assembly of a functional nuclear pore complex (NPC) on the surface of chromosomes as nuclei form at the end of mitosis. May initiate NPC assembly by binding to chromatin and recruiting the Nup107-160 subcomplex, which may in turn recruit membrane vesicles containing pom121 and tmem48/ndc1. Association with chromatin may require the presence of the mcm2-mcm7 complex, suggesting a mechanism for coordination of nuclear assembly and the inactivation of replication licensing. The chain is Protein ELYS (ahctf1) from Xenopus laevis (African clawed frog).